The sequence spans 465 residues: Probable Xaa-Pro aminopeptidase PEPP (465 aa).

Asp259, Asp270, Glu395, and Glu435 together coordinate Mn(2+).

This sequence belongs to the peptidase M24B family. Requires Mn(2+) as cofactor.

It carries out the reaction Release of any N-terminal amino acid, including proline, that is linked to proline, even from a dipeptide or tripeptide.. Its function is as follows. Catalyzes the removal of a penultimate prolyl residue from the N-termini of peptides. The polypeptide is Probable Xaa-Pro aminopeptidase PEPP (PEPP) (Pyricularia oryzae (strain 70-15 / ATCC MYA-4617 / FGSC 8958) (Rice blast fungus)).